A 931-amino-acid polypeptide reads, in one-letter code: Scaffold attachment factor B1 (931 aa).

Residues 1–24 (MAETLSGLGDSGAASAAAVSSAAS) show a composition bias toward low complexity. Residues 1 to 35 (MAETLSGLGDSGAASAAAVSSAASETGTRRLSDLR) form a disordered region. An N-acetylalanine modification is found at A2. S24 and S55 each carry phosphoserine. An SAP domain is found at 31–65 (LSDLRVIDLRAELRKRNLTSSGNKSVLMERLKKAI). The disordered stretch occupies residues 64-121 (AIEEEGGNPDEIEVISEGNKKMPKRPSKGKKPEDEGVEDNGLEENSGDGQEDVETSLE). A compositionally biased stretch (acidic residues) spans 67 to 77 (EEGGNPDEIEV). Phosphoserine is present on S79. A compositionally biased stretch (acidic residues) spans 98-118 (EGVEDNGLEENSGDGQEDVET). Residues K171 and K185 each participate in a glycyl lysine isopeptide (Lys-Gly) (interchain with G-Cter in SUMO2) cross-link. Phosphoserine occurs at positions 194, 196, and 208. Disordered stretches follow at residues 205 to 304 (EEAS…TRCQ) and 316 to 430 (KREP…GRNF). The span at 224–233 (CKSEPVKEEG) shows a compositional bias: basic and acidic residues. A Glycyl lysine isopeptide (Lys-Gly) (interchain with G-Cter in SUMO) cross-link involves residue K230. The span at 267-287 (EEEEEEEEEEEQEEEQEEEGD) shows a compositional bias: acidic residues. K316 is covalently cross-linked (Glycyl lysine isopeptide (Lys-Gly) (interchain with G-Cter in SUMO)). Polar residues predominate over residues 341–356 (EQSSTAAQLPETTSQE). Residues 368-380 (EPRDSKDDVKKFA) show a composition bias toward basic and acidic residues. K403 is covalently cross-linked (Glycyl lysine isopeptide (Lys-Gly) (interchain with G-Cter in SUMO2)). S405 and S406 each carry phosphoserine. A compositionally biased stretch (basic and acidic residues) spans 412–423 (DTKRLSREEKGR). A Glycyl lysine isopeptide (Lys-Gly) (interchain with G-Cter in SUMO2) cross-link involves residue K414. Residues 428–506 (RNFWVSGLSS…KMISVEKAKS (79 aa)) enclose the RRM domain. S437 is modified (phosphoserine). 2 stretches are compositionally biased toward basic and acidic residues: residues 500-573 (SVEK…ERSR) and 581-592 (GTERTVVMDKSK). Disordered regions lie at residues 500 to 663 (SVEK…WERE), 691 to 720 (RLER…LRRQ), 759 to 843 (RYHS…PRRD), and 872 to 931 (RWQG…QQTQ). Residues K505, K536, K565, and K592 each participate in a glycyl lysine isopeptide (Lys-Gly) (interchain with G-Cter in SUMO2) cross-link. The interaction with POLR2A; SFRS1; SFRS9 and SFRS10 stretch occupies residues 550–816 (TDDGSTEKSK…RHGGPERHGR (267 aa)). K600 participates in a covalent cross-link: Glycyl lysine isopeptide (Lys-Gly) (interchain with G-Cter in SUMO1); alternate. Residue K600 forms a Glycyl lysine isopeptide (Lys-Gly) (interchain with G-Cter in SUMO2); alternate linkage. Phosphoserine occurs at positions 602, 604, 623, and 626. Basic and acidic residues predominate over residues 603–663 (GSKERASKSQ…QRLQAQWERE (61 aa)). The Nuclear localization signal signature appears at 621-638 (KRSVVSFDKVKESRKSRD). At K629 the chain carries N6-acetyllysine. Basic and acidic residues predominate over residues 759 to 820 (RYHSDFSRQD…PERHGRDSRD (62 aa)). R834 carries the post-translational modification Omega-N-methylarginine. Asymmetric dimethylarginine occurs at positions 892, 898, 908, and 914.

In terms of assembly, monomer and homodimer. Interacts with KHDRBS3. Interacts with CLK2. Interacts with POLR2A, ASF/SRSF1, SRp30c/SRFS9 and TRA2B/SFRS10. Interacts with SRPK1 and inhibits its activity. Interacts with RBMX. Interacts with FUS. Interacts with ZBED4. Phosphorylated by CDC-like kinase 2 (CLK2). Post-translationally, sumoylated by PIAS1 with SUMO1 and SUMO2/3, desumoylated by SENP1. Sumoylation is required for transcriptional repressor activity.

It localises to the nucleus. In terms of biological role, binds to scaffold/matrix attachment region (S/MAR) DNA and forms a molecular assembly point to allow the formation of a 'transcriptosomal' complex (consisting of SR proteins and RNA polymerase II) coupling transcription and RNA processing. Functions as an estrogen receptor corepressor and can also bind to the HSP27 promoter and decrease its transcription. Thereby acts as a negative regulator of cell proliferation. When associated with RBMX, binds to and stimulates transcription from the SREBF1 promoter. The sequence is that of Scaffold attachment factor B1 (Safb) from Rattus norvegicus (Rat).